The sequence spans 598 residues: UvrABC system protein C (598 aa).

Residues 14–91 (DSPGCYLHKD…IQKNMPKYNI (78 aa)) enclose the GIY-YIG domain. The 36-residue stretch at 196–231 (DKIIEDLRSKMLAASEEMAFERAAEYRDLISGIATM) folds into the UVR domain.

The protein belongs to the UvrC family. As to quaternary structure, interacts with UvrB in an incision complex.

Its subcellular location is the cytoplasm. Its function is as follows. The UvrABC repair system catalyzes the recognition and processing of DNA lesions. UvrC both incises the 5' and 3' sides of the lesion. The N-terminal half is responsible for the 3' incision and the C-terminal half is responsible for the 5' incision. In Streptococcus pyogenes serotype M5 (strain Manfredo), this protein is UvrABC system protein C.